A 41-amino-acid polypeptide reads, in one-letter code: DYDWSLRGPPKCATYGQKCRTWSPPNCCWNLRCKAFRCRPR.

Intrachain disulfides connect C12–C28, C19–C33, and C27–C38.

In terms of tissue distribution, granular hemocytes, small secretory granules.

It localises to the secreted. Binds to chitin. Shows strong activity against E.coli (IC(50) is 1.2 ug/ml). Is also very active against S.aureus (IC(50) is 0.8 ug/ml), C.albicans (IC(50) is 0.9 ug/ml) and P.pastoris (IC(50) is 0.3 ug/ml). Binds to chitin (5.2 uM are required to obtain 50% of binding). Causes hemolysis on sheep erythrocytes, probably by forming ion-permeable pores. In Tachypleus tridentatus (Japanese horseshoe crab), this protein is Tachystatin-C.